A 130-amino-acid chain; its full sequence is Small ribosomal subunit protein uS8 (130 aa).

It belongs to the universal ribosomal protein uS8 family. Part of the 30S ribosomal subunit. Contacts proteins S5 and S12.

One of the primary rRNA binding proteins, it binds directly to 16S rRNA central domain where it helps coordinate assembly of the platform of the 30S subunit. The protein is Small ribosomal subunit protein uS8 of Pseudoalteromonas translucida (strain TAC 125).